A 134-amino-acid polypeptide reads, in one-letter code: Small ribosomal subunit protein uS11 (134 aa).

The protein belongs to the universal ribosomal protein uS11 family. In terms of assembly, part of the 30S ribosomal subunit. Interacts with proteins S7 and S18. Binds to IF-3.

Located on the platform of the 30S subunit, it bridges several disparate RNA helices of the 16S rRNA. Forms part of the Shine-Dalgarno cleft in the 70S ribosome. In Acidovorax ebreus (strain TPSY) (Diaphorobacter sp. (strain TPSY)), this protein is Small ribosomal subunit protein uS11.